Here is a 499-residue protein sequence, read N- to C-terminus: Salviol synthase (499 aa).

The chain crosses the membrane as a helical span at residues 4–24; it reads HIPSLVLCISFFIFFKIVSKL. C436 is a heme binding site.

It belongs to the cytochrome P450 family. Heme is required as a cofactor. Expressed in leaf glandular trichomes.

Its subcellular location is the membrane. It carries out the reaction ferruginol + reduced [NADPH--hemoprotein reductase] + O2 = salviol + oxidized [NADPH--hemoprotein reductase] + H2O + H(+). The protein operates within secondary metabolite biosynthesis; terpenoid biosynthesis. Functionally, monooxygenase involved in the biosynthesis of labdane-related diterpenes natural products. Catalyzes the oxidation of ferruginol to produce salviol. Salviol is an intermediate in the biosynthesis of carnosate, a potent antioxidant. This chain is Salviol synthase, found in Salvia pomifera (Apple sage).